The sequence spans 366 residues: GDSL esterase/lipase At1g74460 (366 aa).

An N-terminal signal peptide occupies residues 1-20; that stretch reads MKFCAIFVLFIVLAINGYDC. The Nucleophile role is filled by serine 30. N-linked (GlcNAc...) asparagine glycans are attached at residues asparagine 113 and asparagine 260. Active-site residues include aspartate 320 and histidine 323.

Belongs to the 'GDSL' lipolytic enzyme family.

The protein localises to the secreted. The chain is GDSL esterase/lipase At1g74460 from Arabidopsis thaliana (Mouse-ear cress).